The sequence spans 296 residues: Protoheme IX farnesyltransferase (296 aa).

The Cytoplasmic portion of the chain corresponds to 1–9 (MMFKQYLQV). A helical transmembrane segment spans residues 10–28 (TKPGIIFGNLISVIGGFLL). At 29–37 (ASKGSIDYP) the chain is on the periplasmic side. The helical transmembrane segment at 38 to 56 (LFIYTLVGVSLVVASGCVF) threads the bilayer. Residues 57–78 (NNYIDRDIDRKMERTKNRVLVK) are Cytoplasmic-facing. A helical transmembrane segment spans residues 79–97 (GLISPAVSLVYATLLGFAG). Residues 98–107 (FMLLWFGANP) lie on the Periplasmic side of the membrane. A helical membrane pass occupies residues 108–126 (LACWLGVMGFVVYVGVYSL). At 127 to 197 (YMKRHSVYGT…YQAANIPVLP (71 aa)) the chain is on the cytoplasmic side. A helical membrane pass occupies residues 198-216 (VVKGISVAKNHITLYIIAF). The Periplasmic portion of the chain corresponds to 217 to 228 (AVATLMLSLGGY). Residues 229-247 (AGYKYLVVAAAVSVWWLGM) traverse the membrane as a helical segment. Residues 248 to 268 (ALRGYKVADDRIWARKLFGFS) are Cytoplasmic-facing. The chain crosses the membrane as a helical span at residues 269–287 (IIAITALSVMMSVDFMVPD). Residues 288–296 (SHTLLAAVW) lie on the Periplasmic side of the membrane.

The protein belongs to the UbiA prenyltransferase family. Protoheme IX farnesyltransferase subfamily.

It localises to the cell inner membrane. The enzyme catalyses heme b + (2E,6E)-farnesyl diphosphate + H2O = Fe(II)-heme o + diphosphate. It participates in porphyrin-containing compound metabolism; heme O biosynthesis; heme O from protoheme: step 1/1. Converts heme B (protoheme IX) to heme O by substitution of the vinyl group on carbon 2 of heme B porphyrin ring with a hydroxyethyl farnesyl side group. This Shigella sonnei (strain Ss046) protein is Protoheme IX farnesyltransferase.